A 505-amino-acid polypeptide reads, in one-letter code: ATP synthase subunit alpha (505 aa).

An ATP-binding site is contributed by 169–176 (GDRQTGKT).

It belongs to the ATPase alpha/beta chains family. As to quaternary structure, F-type ATPases have 2 components, CF(1) - the catalytic core - and CF(0) - the membrane proton channel. CF(1) has five subunits: alpha(3), beta(3), gamma(1), delta(1), epsilon(1). CF(0) has three main subunits: a(1), b(2) and c(9-12). The alpha and beta chains form an alternating ring which encloses part of the gamma chain. CF(1) is attached to CF(0) by a central stalk formed by the gamma and epsilon chains, while a peripheral stalk is formed by the delta and b chains.

It localises to the cell membrane. The catalysed reaction is ATP + H2O + 4 H(+)(in) = ADP + phosphate + 5 H(+)(out). In terms of biological role, produces ATP from ADP in the presence of a proton gradient across the membrane. The alpha chain is a regulatory subunit. The polypeptide is ATP synthase subunit alpha (Alkaliphilus oremlandii (strain OhILAs) (Clostridium oremlandii (strain OhILAs))).